A 440-amino-acid chain; its full sequence is Nuclear hormone receptor family member nhr-130 (440 aa).

Residues 34–110 (LYTCQVCALP…VGMDPGRFQF (77 aa)) constitute a DNA-binding region (nuclear receptor). NR C4-type zinc fingers lie at residues 37–57 (CQVCALPAHGNHFGAISCRAC) and 74–93 (CKKQNNCDIWENGRYKCKKC). The NR LBD domain occupies 184 to 439 (EKPLIARNNL…FSHPEMFEDT (256 aa)).

The protein belongs to the nuclear hormone receptor family.

The protein localises to the nucleus. Functionally, orphan nuclear receptor. The protein is Nuclear hormone receptor family member nhr-130 (nhr-130) of Caenorhabditis elegans.